Here is a 248-residue protein sequence, read N- to C-terminus: 3-deoxy-manno-octulosonate cytidylyltransferase (248 aa).

Belongs to the KdsB family.

It localises to the cytoplasm. It carries out the reaction 3-deoxy-alpha-D-manno-oct-2-ulosonate + CTP = CMP-3-deoxy-beta-D-manno-octulosonate + diphosphate. It participates in nucleotide-sugar biosynthesis; CMP-3-deoxy-D-manno-octulosonate biosynthesis; CMP-3-deoxy-D-manno-octulosonate from 3-deoxy-D-manno-octulosonate and CTP: step 1/1. It functions in the pathway bacterial outer membrane biogenesis; lipopolysaccharide biosynthesis. In terms of biological role, activates KDO (a required 8-carbon sugar) for incorporation into bacterial lipopolysaccharide in Gram-negative bacteria. The protein is 3-deoxy-manno-octulosonate cytidylyltransferase of Shigella boydii serotype 18 (strain CDC 3083-94 / BS512).